The chain runs to 242 residues: MAKRVLIKFSGEALANEDGHGINSKTLKYIASEIKPLVDSGVEVGLVVGGGNIIRGVNASKEGIIRRSSGDYMGMLATVINAVALQEALEYFGLTARVQSAIEMNEICEPFIVRRAMRHLEKGRIVIFAAGTGNPFFTTDTAATLRAVEIGANMIIKATKVDGVYDKDPHKYPDAKKLDRLTYDEALQDNIKVMDDTAIALAKDNALPIIVCNMFEEGNLYDIIVNNNLEKCSIVTDKKENE.

Residue 8 to 11 (KFSG) participates in ATP binding. G50 serves as a coordination point for UMP. ATP-binding residues include G51 and R55. Residues D71 and 132 to 139 (TGNPFFTT) contribute to the UMP site. The ATP site is built by T159, Y165, and D168.

Belongs to the UMP kinase family. In terms of assembly, homohexamer.

It is found in the cytoplasm. It catalyses the reaction UMP + ATP = UDP + ADP. It participates in pyrimidine metabolism; CTP biosynthesis via de novo pathway; UDP from UMP (UMPK route): step 1/1. Inhibited by UTP. Functionally, catalyzes the reversible phosphorylation of UMP to UDP. This is Uridylate kinase from Nitratiruptor sp. (strain SB155-2).